A 241-amino-acid chain; its full sequence is MAGHSKWANIKHKKAAADAKRGKIWTRLIKEITVAAKLGGGDPDSNPRLRLSMDKAMDANMPKDNIQRAIQRGVGGLEGVNYEEIRYEGYGLSGAAIIVDCLTDNRTRTVAEVRHAFSKHGGNMGTEGSVAFMFTHCGQFLFAPGTPEDKLMDAALEAGADDVVTNDDGSIEVTCPPNDFSAVKAALEGAGFKAEVADVVMKPQNEVSFSGDDAAKMQKLLDALENLDDVQEVFTNAVIED.

Belongs to the TACO1 family.

It localises to the cytoplasm. This is Probable transcriptional regulatory protein RALTA_A0859 from Cupriavidus taiwanensis (strain DSM 17343 / BCRC 17206 / CCUG 44338 / CIP 107171 / LMG 19424 / R1) (Ralstonia taiwanensis (strain LMG 19424)).